The chain runs to 459 residues: Protein BTN1 (459 aa).

A run of 11 helical transmembrane segments spans residues Val-37–Val-57, Ala-73–Ile-93, Ile-102–Glu-122, Leu-129–Leu-149, Gly-167–Val-187, Gly-189–Leu-209, Val-240–Ala-260, Ala-283–Asn-303, Tyr-325–Ser-342, Leu-352–Leu-372, and Phe-374–Ala-394.

This sequence belongs to the battenin family.

It is found in the vacuole membrane. Its function is as follows. Involved in vacuolar transport and vacuole pH homeostasis. Also required for cytokinesis. This is Protein BTN1 (BTN1) from Chaetomium globosum (strain ATCC 6205 / CBS 148.51 / DSM 1962 / NBRC 6347 / NRRL 1970) (Soil fungus).